The chain runs to 192 residues: Thymidylate kinase (192 aa).

7 to 14 contributes to the ATP binding site; the sequence is GVDGVGKS.

It belongs to the thymidylate kinase family.

It carries out the reaction dTMP + ATP = dTDP + ADP. In terms of biological role, phosphorylation of dTMP to form dTDP in both de novo and salvage pathways of dTTP synthesis. The polypeptide is Thymidylate kinase (Campylobacter fetus subsp. fetus (strain 82-40)).